The sequence spans 733 residues: Ribosomal protein S6 kinase alpha-2 (733 aa).

A Protein kinase 1 domain is found at 59–318 (FELLKVLGQG…VEEIKRHPFF (260 aa)). ATP contacts are provided by residues 65–73 (LGQGSYGKV) and K91. D184 acts as the Proton acceptor in catalysis. A Phosphoserine; by PDPK1 modification is found at S218. An AGC-kinase C-terminal domain is found at 319-388 (VTIDWNTLYR…VASSLIQEPS (70 aa)). Residue S377 is modified to Phosphoserine. In terms of domain architecture, Protein kinase 2 spans 415–672 (YEIKEDIGVG…AMQVLKHPWV (258 aa)). ATP-binding positions include 421-429 (IGVGSYSVC) and K444. D532 serves as the catalytic Proton acceptor.

This sequence belongs to the protein kinase superfamily. AGC Ser/Thr protein kinase family. S6 kinase subfamily. In terms of assembly, forms a complex with either MAPK1/ERK2 or MAPK3/ERK1 in quiescent cells. Transiently dissociates following mitogenic stimulation. Interacts with FBXO5; cooperate to induce the metaphase arrest of early blastomeres; increases and stabilizes interaction of FBXO5 with CDC20. It depends on Mg(2+) as a cofactor. Activated by phosphorylation at Ser-218 by PDPK1. Autophosphorylated on Ser-377, as part of the activation process. May be phosphorylated at Thr-356 and Ser-360 by MAPK1/ERK2 and MAPK3/ERK1. Post-translationally, N-terminal myristoylation results in an activated kinase in the absence of added growth factors. As to expression, widely expressed with higher expression in lung, skeletal muscle, brain, uterus, ovary, thyroid and prostate.

It is found in the nucleus. The protein resides in the cytoplasm. The enzyme catalyses L-seryl-[protein] + ATP = O-phospho-L-seryl-[protein] + ADP + H(+). It carries out the reaction L-threonyl-[protein] + ATP = O-phospho-L-threonyl-[protein] + ADP + H(+). Upon extracellular signal or mitogen stimulation, phosphorylated at Thr-570 in the C-terminal kinase domain (CTKD) by MAPK1/ERK2 and MAPK3/ERK1. The activated CTKD then autophosphorylates Ser-377, allowing binding of PDPK1, which in turn phosphorylates Ser-218 in the N-terminal kinase domain (NTDK) leading to the full activation of the protein and subsequent phosphorylation of the substrates by the NTKD. Functionally, serine/threonine-protein kinase that acts downstream of ERK (MAPK1/ERK2 and MAPK3/ERK1) signaling and mediates mitogenic and stress-induced activation of transcription factors, regulates translation, and mediates cellular proliferation, survival, and differentiation. May function as tumor suppressor in epithelial ovarian cancer cells. The sequence is that of Ribosomal protein S6 kinase alpha-2 (RPS6KA2) from Homo sapiens (Human).